We begin with the raw amino-acid sequence, 180 residues long: NAD(P)H-quinone oxidoreductase subunit I, chloroplastic (180 aa).

4Fe-4S ferredoxin-type domains lie at 55–84 and 95–124; these read GRIHFEFDKCIACEVCVRVCPIDLPVVDWR and LNYSIDFGICIFCGNCVEYCPTNCLSMTEE. Residues Cys64, Cys67, Cys70, Cys74, Cys104, Cys107, Cys110, and Cys114 each contribute to the [4Fe-4S] cluster site.

Belongs to the complex I 23 kDa subunit family. As to quaternary structure, NDH is composed of at least 16 different subunits, 5 of which are encoded in the nucleus. It depends on [4Fe-4S] cluster as a cofactor.

It localises to the plastid. The protein resides in the chloroplast thylakoid membrane. The enzyme catalyses a plastoquinone + NADH + (n+1) H(+)(in) = a plastoquinol + NAD(+) + n H(+)(out). It catalyses the reaction a plastoquinone + NADPH + (n+1) H(+)(in) = a plastoquinol + NADP(+) + n H(+)(out). Its function is as follows. NDH shuttles electrons from NAD(P)H:plastoquinone, via FMN and iron-sulfur (Fe-S) centers, to quinones in the photosynthetic chain and possibly in a chloroplast respiratory chain. The immediate electron acceptor for the enzyme in this species is believed to be plastoquinone. Couples the redox reaction to proton translocation, and thus conserves the redox energy in a proton gradient. This Amborella trichopoda protein is NAD(P)H-quinone oxidoreductase subunit I, chloroplastic.